Reading from the N-terminus, the 343-residue chain is MEKVKVAVNGYGTIGKRVADAIRLQPDMELIGVGKTSPNYEAIIADKKGIKIYTVKDNIGKFEKSGIRVAGTIEDMVKEADIVVDTTPNGVGATYKPLYQSLGKNALFQGGEKADVADISFSALCNYDEAKGKKYIRVVSCNTTGMLRIICTMNKISKVEKVRATIVRRAADPKEVKRGPINSIVPDPASVPSHHAKDVLTVIKGIDIVTMAVIAPTTLMHLHTMVLTVKDKVNRDDIINTFLNTPRIILVNSSRTTVSSTAEIIEVSRDMGRVRYDIPEVVVFEDSIYTNGNEVFLMYGVHQESIVVPENIDAIRASLGLMGKEESIKVTNDTLGIMKGYLL.

NAD(+) is bound by residues 13-14 and G111; that span reads TI. 140–142 is a binding site for D-glyceraldehyde 3-phosphate; the sequence is SCN. The active-site Nucleophile is the C141. NAD(+) is bound at residue R169. 195–196 contacts D-glyceraldehyde 3-phosphate; the sequence is HA. Q303 is an NAD(+) binding site.

The protein belongs to the glyceraldehyde-3-phosphate dehydrogenase family. In terms of assembly, homotetramer.

The protein resides in the cytoplasm. The catalysed reaction is D-glyceraldehyde 3-phosphate + phosphate + NADP(+) = (2R)-3-phospho-glyceroyl phosphate + NADPH + H(+). It catalyses the reaction D-glyceraldehyde 3-phosphate + phosphate + NAD(+) = (2R)-3-phospho-glyceroyl phosphate + NADH + H(+). It functions in the pathway carbohydrate degradation; glycolysis; pyruvate from D-glyceraldehyde 3-phosphate: step 1/5. This is Glyceraldehyde-3-phosphate dehydrogenase from Sulfurisphaera tokodaii (strain DSM 16993 / JCM 10545 / NBRC 100140 / 7) (Sulfolobus tokodaii).